The primary structure comprises 343 residues: Isopentenyl-diphosphate delta-isomerase (343 aa).

A substrate-binding site is contributed by 9 to 10 (RK). FMN-binding positions include S66, 67-69 (SMT), S98, and N126. 98 to 100 (SQR) lines the substrate pocket. Substrate is bound at residue Q161. E162 is a Mg(2+) binding site. Residues K193, T223, 273–275 (GIR), and 294–295 (AA) contribute to the FMN site.

Belongs to the IPP isomerase type 2 family. As to quaternary structure, homooctamer. Dimer of tetramers. Requires FMN as cofactor. NADPH serves as cofactor. It depends on Mg(2+) as a cofactor.

It localises to the cytoplasm. It catalyses the reaction isopentenyl diphosphate = dimethylallyl diphosphate. In terms of biological role, involved in the biosynthesis of isoprenoids. Catalyzes the 1,3-allylic rearrangement of the homoallylic substrate isopentenyl (IPP) to its allylic isomer, dimethylallyl diphosphate (DMAPP). In Hydrogenovibrio crunogenus (strain DSM 25203 / XCL-2) (Thiomicrospira crunogena), this protein is Isopentenyl-diphosphate delta-isomerase.